The sequence spans 452 residues: UDP-N-acetylmuramoylalanine--D-glutamate ligase (452 aa).

115-121 serves as a coordination point for ATP; that stretch reads GTNGKTT.

It belongs to the MurCDEF family.

It localises to the cytoplasm. It carries out the reaction UDP-N-acetyl-alpha-D-muramoyl-L-alanine + D-glutamate + ATP = UDP-N-acetyl-alpha-D-muramoyl-L-alanyl-D-glutamate + ADP + phosphate + H(+). It participates in cell wall biogenesis; peptidoglycan biosynthesis. Its function is as follows. Cell wall formation. Catalyzes the addition of glutamate to the nucleotide precursor UDP-N-acetylmuramoyl-L-alanine (UMA). This chain is UDP-N-acetylmuramoylalanine--D-glutamate ligase, found in Elusimicrobium minutum (strain Pei191).